Reading from the N-terminus, the 933-residue chain is Phosphoenolpyruvate carboxylase (933 aa).

Residues His158 and Lys592 contribute to the active site.

This sequence belongs to the PEPCase type 1 family. Requires Mg(2+) as cofactor.

It catalyses the reaction oxaloacetate + phosphate = phosphoenolpyruvate + hydrogencarbonate. Forms oxaloacetate, a four-carbon dicarboxylic acid source for the tricarboxylic acid cycle. This Nitrosomonas europaea (strain ATCC 19718 / CIP 103999 / KCTC 2705 / NBRC 14298) protein is Phosphoenolpyruvate carboxylase.